The sequence spans 444 residues: UDP-N-acetylmuramoylalanine--D-glutamate ligase (444 aa).

109-115 (GSNGKTT) contributes to the ATP binding site.

It belongs to the MurCDEF family.

Its subcellular location is the cytoplasm. The catalysed reaction is UDP-N-acetyl-alpha-D-muramoyl-L-alanine + D-glutamate + ATP = UDP-N-acetyl-alpha-D-muramoyl-L-alanyl-D-glutamate + ADP + phosphate + H(+). It participates in cell wall biogenesis; peptidoglycan biosynthesis. In terms of biological role, cell wall formation. Catalyzes the addition of glutamate to the nucleotide precursor UDP-N-acetylmuramoyl-L-alanine (UMA). The polypeptide is UDP-N-acetylmuramoylalanine--D-glutamate ligase (Bacteroides fragilis (strain ATCC 25285 / DSM 2151 / CCUG 4856 / JCM 11019 / LMG 10263 / NCTC 9343 / Onslow / VPI 2553 / EN-2)).